We begin with the raw amino-acid sequence, 777 residues long: ATPase ARSA1 (777 aa).

110–117 (KGGVGKTS) is a binding site for ATP. The active site involves Asp-139. ATP is bound by residues Asn-372 and 454–461 (KGGVGKTS). The active site involves Asp-483. Asn-712 contacts ATP.

The protein belongs to the arsA ATPase family. Monomer. Interacts with TOC34.

It localises to the cytoplasm. The protein localises to the cytosol. ATPase required for the post-translational delivery of tail-anchored (TA) proteins to the chloroplast. Required for the accumulation of TOC34, an essential component of the outer chloroplast membrane translocon (TOC) complex. Recognizes and selectively binds the transmembrane domain of TA proteins in the cytosol. This complex then targets to chloroplast, where the tail-anchored protein is released for insertion. This process is regulated by ATP binding and hydrolysis. In Chlamydomonas reinhardtii (Chlamydomonas smithii), this protein is ATPase ARSA1.